The following is a 206-amino-acid chain: Small ribosomal subunit protein uS4 (206 aa).

The S4 RNA-binding domain maps to 96 to 157; that stretch reads CRLDNVVYRM…KCRNQLRIAQ (62 aa).

It belongs to the universal ribosomal protein uS4 family. In terms of assembly, part of the 30S ribosomal subunit. Contacts protein S5. The interaction surface between S4 and S5 is involved in control of translational fidelity.

In terms of biological role, one of the primary rRNA binding proteins, it binds directly to 16S rRNA where it nucleates assembly of the body of the 30S subunit. Its function is as follows. With S5 and S12 plays an important role in translational accuracy. The chain is Small ribosomal subunit protein uS4 from Stutzerimonas stutzeri (strain A1501) (Pseudomonas stutzeri).